The primary structure comprises 142 residues: Large ribosomal subunit protein uL11 (142 aa).

This sequence belongs to the universal ribosomal protein uL11 family. As to quaternary structure, part of the ribosomal stalk of the 50S ribosomal subunit. Interacts with L10 and the large rRNA to form the base of the stalk. L10 forms an elongated spine to which L12 dimers bind in a sequential fashion forming a multimeric L10(L12)X complex. One or more lysine residues are methylated.

Functionally, forms part of the ribosomal stalk which helps the ribosome interact with GTP-bound translation factors. This chain is Large ribosomal subunit protein uL11, found in Hamiltonella defensa subsp. Acyrthosiphon pisum (strain 5AT).